Reading from the N-terminus, the 170-residue chain is Universal stress protein MJ0531 (170 aa).

This sequence belongs to the universal stress protein A family.

This is Universal stress protein MJ0531 from Methanocaldococcus jannaschii (strain ATCC 43067 / DSM 2661 / JAL-1 / JCM 10045 / NBRC 100440) (Methanococcus jannaschii).